A 695-amino-acid chain; its full sequence is Putative ATP-dependent RNA helicase L540 (695 aa).

The 167-residue stretch at 53 to 219 (LSALENYQLV…FNSVDSTVID (167 aa)) folds into the Helicase ATP-binding domain. 66–73 (SSTGSGKS) lines the ATP pocket. The short motif at 164-167 (DEAH) is the DEAH box element. A Helicase C-terminal domain is found at 247-434 (LIEDLIHQQI…GINMMNQLMD (188 aa)).

Belongs to the DEAD box helicase family. DEAH subfamily.

The protein localises to the virion. It catalyses the reaction ATP + H2O = ADP + phosphate + H(+). This Acanthamoeba polyphaga (Amoeba) protein is Putative ATP-dependent RNA helicase L540.